The chain runs to 543 residues: Protein MGF 505-10R (543 aa).

Belongs to the asfivirus MGF 505 family.

Plays a role in virus cell tropism, and may be required for efficient virus replication in macrophages. The protein is Protein MGF 505-10R of Ornithodoros (relapsing fever ticks).